The following is a 282-amino-acid chain: Sulfur carrier protein FdhD (282 aa).

The active-site Cysteine persulfide intermediate is the C115.

This sequence belongs to the FdhD family.

Its subcellular location is the cytoplasm. Its function is as follows. Required for formate dehydrogenase (FDH) activity. Acts as a sulfur carrier protein that transfers sulfur from IscS to the molybdenum cofactor prior to its insertion into FDH. The sequence is that of Sulfur carrier protein FdhD from Streptomyces coelicolor (strain ATCC BAA-471 / A3(2) / M145).